The sequence spans 425 residues: Enolase (425 aa).

Q162 contributes to the (2R)-2-phosphoglycerate binding site. E204 acts as the Proton donor in catalysis. D241, E284, and D311 together coordinate Mg(2+). Residues K336, R365, S366, and K387 each contribute to the (2R)-2-phosphoglycerate site. Catalysis depends on K336, which acts as the Proton acceptor.

Belongs to the enolase family. Requires Mg(2+) as cofactor.

It localises to the cytoplasm. The protein resides in the secreted. Its subcellular location is the cell surface. The catalysed reaction is (2R)-2-phosphoglycerate = phosphoenolpyruvate + H2O. It participates in carbohydrate degradation; glycolysis; pyruvate from D-glyceraldehyde 3-phosphate: step 4/5. Catalyzes the reversible conversion of 2-phosphoglycerate (2-PG) into phosphoenolpyruvate (PEP). It is essential for the degradation of carbohydrates via glycolysis. The sequence is that of Enolase from Brucella abortus (strain S19).